A 456-amino-acid chain; its full sequence is tRNA modification GTPase MnmE (456 aa).

3 residues coordinate (6S)-5-formyl-5,6,7,8-tetrahydrofolate: R24, E81, and K120. Positions 216–379 (GMTVVIAGRP…LRDHLKACMG (164 aa)) constitute a TrmE-type G domain. K(+) is bound at residue N226. GTP is bound by residues 226 to 231 (NAGKSS), 245 to 251 (TDIAGTT), 270 to 273 (DTAG), and 335 to 338 (NKAD). S230 contributes to the Mg(2+) binding site. Residues T245, I247, and T250 each coordinate K(+). T251 serves as a coordination point for Mg(2+). Residue K456 participates in (6S)-5-formyl-5,6,7,8-tetrahydrofolate binding.

Belongs to the TRAFAC class TrmE-Era-EngA-EngB-Septin-like GTPase superfamily. TrmE GTPase family. Homodimer. Heterotetramer of two MnmE and two MnmG subunits. It depends on K(+) as a cofactor.

It localises to the cytoplasm. Its function is as follows. Exhibits a very high intrinsic GTPase hydrolysis rate. Involved in the addition of a carboxymethylaminomethyl (cmnm) group at the wobble position (U34) of certain tRNAs, forming tRNA-cmnm(5)s(2)U34. The chain is tRNA modification GTPase MnmE from Pseudomonas putida (strain GB-1).